The following is an 802-amino-acid chain: Elongation factor G, mitochondrial (802 aa).

The N-terminal 24 residues, 1–24 (MRCPSLARLPNRALSGLTRSPVRL), are a transit peptide targeting the mitochondrion. Residues 100–387 (SRLRNIGIAA…GVIDYLPNPS (288 aa)) form the tr-type G domain. GTP-binding positions include 109–116 (AHIDSGKT), 185–189 (DTPGH), and 239–242 (NKMD).

The protein belongs to the TRAFAC class translation factor GTPase superfamily. Classic translation factor GTPase family. EF-G/EF-2 subfamily.

The protein resides in the mitochondrion. The protein operates within protein biosynthesis; polypeptide chain elongation. Functionally, mitochondrial GTPase that catalyzes the GTP-dependent ribosomal translocation step during translation elongation. During this step, the ribosome changes from the pre-translocational (PRE) to the post-translocational (POST) state as the newly formed A-site-bound peptidyl-tRNA and P-site-bound deacylated tRNA move to the P and E sites, respectively. Catalyzes the coordinated movement of the two tRNA molecules, the mRNA and conformational changes in the ribosome. The protein is Elongation factor G, mitochondrial (mef1) of Aspergillus fumigatus (strain CBS 144.89 / FGSC A1163 / CEA10) (Neosartorya fumigata).